We begin with the raw amino-acid sequence, 443 residues long: Trihelix transcription factor ASIL2 (443 aa).

Positions 1–82 (MEDDEDIRSQ…RPTGGGGRED (82 aa)) are disordered. Residues 38–48 (YSLTPPGNSSQ) show a composition bias toward polar residues. Over residues 64–78 (SGGGNNSSGRPTGGG) the composition is skewed to gly residues. In terms of domain architecture, Myb-like spans 84-144 (WSEAATAVLI…QCKNRIDTVK (61 aa)). Disordered stretches follow at residues 238–350 (FGGS…GNKW) and 413–443 (RRMGNTSNDHHHSRKNNINAIVNNNNDLGNN). Residues 239 to 249 (GGSGGGGGGGS) are compositionally biased toward gly residues. Positions 271–286 (TLPQQGRTLPQQQQQG) are enriched in low complexity. The Bipartite nuclear localization signal motif lies at 290–303 (KRCSESKRWRFRKR). A compositionally biased stretch (basic and acidic residues) spans 333-350 (MKTEEKKKQDGDGVGNKW). Residues 360-414 (FGEAYEQTENAKLQQVVEMEKERMKFLKELELQRMQFFVKTQLEISQLKQQHGRR) are a coiled coil. Positions 428–443 (NNINAIVNNNNDLGNN) are enriched in low complexity.

It localises to the nucleus. Transcription regulator that may repress the maturation program during early embryogenesis. This Arabidopsis thaliana (Mouse-ear cress) protein is Trihelix transcription factor ASIL2.